We begin with the raw amino-acid sequence, 176 residues long: PRELI domain-containing protein 2 (176 aa).

The 175-residue stretch at Met-1–Phe-175 folds into the PRELI/MSF1 domain.

The protein is PRELI domain-containing protein 2 (prelid2) of Xenopus tropicalis (Western clawed frog).